Here is a 427-residue protein sequence, read N- to C-terminus: Peptidase B (427 aa).

Lys-195 and Asp-200 together coordinate Mn(2+). Lys-207 is an active-site residue. Mn(2+) is bound by residues Asp-218, Asp-277, and Glu-279. Residue Arg-281 is part of the active site.

This sequence belongs to the peptidase M17 family. Homohexamer. Mn(2+) is required as a cofactor.

The protein resides in the cytoplasm. The enzyme catalyses Release of an N-terminal amino acid, Xaa, from a peptide or arylamide. Xaa is preferably Glu or Asp but may be other amino acids, including Leu, Met, His, Cys and Gln.. Functionally, probably plays an important role in intracellular peptide degradation. This is Peptidase B from Salmonella choleraesuis (strain SC-B67).